Here is a 179-residue protein sequence, read N- to C-terminus: M-zodatoxin-Lt4b (179 aa).

The signal sequence occupies residues 1–22; that stretch reads MKFSIIALALAVAFVCVAESRS. A propeptide spanning residues 23–43 is cleaved from the precursor; the sequence is EEEGYDVSEEIQAEELEEAAR. Positions 40-43 match the Processing quadruplet motif 1 motif; it reads EAAR. Position 61 is a glutamine amide (Gln61). The Inverted processing quadruplet motif 1 signature appears at 63–66; it reads REDS. Positions 63–71 are excised as a propeptide; the sequence is REDSEDAGR. The Processing quadruplet motif 2 motif lies at 68–71; that stretch reads DAGR. Residue Gln89 is modified to Glutamine amide. An Inverted processing quadruplet motif 2 motif is present at residues 91–94; it reads REDT. A propeptide spanning residues 91–99 is cleaved from the precursor; the sequence is REDTEEAGR. The Processing quadruplet motif 3 motif lies at 96–99; it reads EAGR. Gln117 is subject to Glutamine amide. The Inverted processing quadruplet motif 3 signature appears at 119 to 122; that stretch reads REDS. Residues 119–127 constitute a propeptide that is removed on maturation; that stretch reads REDSEEAGR. A Processing quadruplet motif 4 motif is present at residues 124 to 127; sequence EAGR. Gln145 carries the post-translational modification Glutamine amide. The short motif at 147-150 is the Inverted processing quadruplet motif 4 element; sequence REDT. The propeptide occupies 147 to 154; the sequence is REDTEEAR. The Processing quadruplet motif 5 motif lies at 151-154; the sequence is EEAR. Position 178 is a phenylalanine amide (Phe178).

Belongs to the cationic peptide 03 (latarcin) family. 04 subfamily. Cleavage of the propeptide depends on the processing quadruplet motif (PQM) (XXXR, with at least one of X being E) and the inverted PQM (RXXX, with at least one of X being E). Expressed by the venom gland.

Its subcellular location is the secreted. Functionally, M-zodatoxin-Lt4b: Has antimicrobial activity against Gram-positive bacteria (A.globiformis VKM Ac-1112 (MIC=0.3 uM), and B.subtilis VKM B-501 (MIC=1.1 uM)), Gram-negative bacteria (E.coli DH5-alpha (MIC=4.4 uM), E.coli MH1 (MIC=4.4 uM), and P.aeruginosa PAO1 (MIC=&gt;35 uM)), and yeasts (P.pastoris GS115 (MIC=&gt;35 uM), and S.cerevisiae Y190 (MIC=35 uM)). Does not have hemolytic activity against rabbit erythrocytes. Causes paralysis, but is not lethal when injected into insect (M.domestica) larvae. In terms of biological role, shows no antimicrobial activity against Gram-positive bacterium B.subtilis B-501 or Gram-negative bacterium E.coli DH5-alpha at concentration up to 20 uM. The sequence is that of M-zodatoxin-Lt4b from Lachesana tarabaevi (Spider).